We begin with the raw amino-acid sequence, 608 residues long: Glutamine--fructose-6-phosphate aminotransferase [isomerizing] (608 aa).

The active-site Nucleophile; for GATase activity is C2. Residues 2–217 (CGIVGILGRE…DGDWVVLTRN (216 aa)) form the Glutamine amidotransferase type-2 domain. 2 consecutive SIS domains span residues 284–423 (LPFD…ARGE) and 456–598 (LARE…VDQP). K603 functions as the For Fru-6P isomerization activity in the catalytic mechanism.

In terms of assembly, homodimer.

The protein resides in the cytoplasm. It catalyses the reaction D-fructose 6-phosphate + L-glutamine = D-glucosamine 6-phosphate + L-glutamate. In terms of biological role, catalyzes the first step in hexosamine metabolism, converting fructose-6P into glucosamine-6P using glutamine as a nitrogen source. This chain is Glutamine--fructose-6-phosphate aminotransferase [isomerizing] (glmS), found in Bradyrhizobium diazoefficiens (strain JCM 10833 / BCRC 13528 / IAM 13628 / NBRC 14792 / USDA 110).